The sequence spans 613 residues: Sulfhydryl oxidase 1 (613 aa).

Positions 1–30 are cleaved as a signal peptide; that stretch reads MTGCGRRSGWLPPLRLLLLPLLLGGPGVGA. Positions 37–157 constitute a Thioredoxin domain; that stretch reads YSASDPLTLL…RERLIDALES (121 aa). Residues Cys-71 and Cys-74 each act as nucleophile in the active site. 2 disulfides stabilise this stretch: Cys-71-Cys-74 and Cys-102-Cys-111. Asn-131 and Asn-244 each carry an N-linked (GlcNAc...) asparagine glycan. A disulfide bridge connects residues Cys-394 and Cys-406. The region spanning 397 to 504 is the ERV/ALR sulfhydryl oxidase domain; it reads SESHFRGFPC…EDPQFPKVQW (108 aa). The FAD site is built by Arg-402, Trp-409, and His-413. Ser-427 carries the phosphoserine modification. Cys-450 and Cys-453 are oxidised to a cystine. Residues Asp-452, His-456, 479–486, Lys-501, and Trp-504 contribute to the FAD site; that span reads WTSHNRVN. The cysteines at positions 510 and 513 are disulfide-linked.

It belongs to the quiescin-sulfhydryl oxidase (QSOX) family. Monomer. FAD serves as cofactor. In terms of processing, N-glycosylated. O-glycosylated on Thr and Ser residues. Detected in endometrium and in uterus glandular epithelial cells (at protein level). Expressed in testis, placenta, pancreas, lung, ovary, endometrium, but not in brain, liver and kidney tissues. Higher expression in epithelial cells.

It localises to the secreted. It catalyses the reaction 2 R'C(R)SH + O2 = R'C(R)S-S(R)CR' + H2O2. Catalyzes the oxidation of sulfhydryl groups in peptide and protein thiols to disulfides with the reduction of oxygen to hydrogen peroxide. Plays a role in disulfide bond formation in a variety of extracellular proteins. In fibroblasts, required for normal incorporation of laminin into the extracellular matrix, and thereby for normal cell-cell adhesion and cell migration. This Cavia porcellus (Guinea pig) protein is Sulfhydryl oxidase 1 (QSOX1).